We begin with the raw amino-acid sequence, 239 residues long: Ribosomal RNA small subunit methyltransferase G (239 aa).

Residues Gly79, Phe84, 130 to 131 (AE), and Arg149 contribute to the S-adenosyl-L-methionine site.

Belongs to the methyltransferase superfamily. RNA methyltransferase RsmG family.

The protein localises to the cytoplasm. In terms of biological role, specifically methylates the N7 position of a guanine in 16S rRNA. This Pelotomaculum thermopropionicum (strain DSM 13744 / JCM 10971 / SI) protein is Ribosomal RNA small subunit methyltransferase G.